A 475-amino-acid polypeptide reads, in one-letter code: Sulfate adenylyltransferase subunit 1 (475 aa).

Residues 25-239 form the tr-type G domain; that stretch reads KSLLRFLTCG…EVLETVEIQR (215 aa). Positions 34-41 are G1; sequence GSVDDGKS. 34–41 contributes to the GTP binding site; it reads GSVDDGKS. The segment at 92–96 is G2; the sequence is GITID. Positions 113–116 are G3; sequence DTPG. GTP is bound by residues 113-117 and 168-171; these read DTPGH and NKMD. A G4 region spans residues 168–171; sequence NKMD. The interval 206–208 is G5; sequence SAL.

This sequence belongs to the TRAFAC class translation factor GTPase superfamily. Classic translation factor GTPase family. CysN/NodQ subfamily. As to quaternary structure, heterodimer composed of CysD, the smaller subunit, and CysN.

It catalyses the reaction sulfate + ATP + H(+) = adenosine 5'-phosphosulfate + diphosphate. The protein operates within sulfur metabolism; hydrogen sulfide biosynthesis; sulfite from sulfate: step 1/3. Its function is as follows. With CysD forms the ATP sulfurylase (ATPS) that catalyzes the adenylation of sulfate producing adenosine 5'-phosphosulfate (APS) and diphosphate, the first enzymatic step in sulfur assimilation pathway. APS synthesis involves the formation of a high-energy phosphoric-sulfuric acid anhydride bond driven by GTP hydrolysis by CysN coupled to ATP hydrolysis by CysD. This is Sulfate adenylyltransferase subunit 1 from Escherichia coli O139:H28 (strain E24377A / ETEC).